Reading from the N-terminus, the 199-residue chain is Outer-membrane lipoprotein LolB (199 aa).

An N-terminal signal peptide occupies residues 1–28; that stretch reads MSVCPAPRSPVRWLHAFTLCLLLAVLAG. A lipid anchor (N-palmitoyl cysteine) is attached at Cys29. A lipid anchor (S-diacylglycerol cysteine) is attached at Cys29.

Belongs to the LolB family. Monomer.

It localises to the cell outer membrane. Functionally, plays a critical role in the incorporation of lipoproteins in the outer membrane after they are released by the LolA protein. The chain is Outer-membrane lipoprotein LolB from Bordetella parapertussis (strain 12822 / ATCC BAA-587 / NCTC 13253).